Consider the following 234-residue polypeptide: Large ribosomal subunit protein uL1 (234 aa).

The protein belongs to the universal ribosomal protein uL1 family. Part of the 50S ribosomal subunit.

Binds directly to 23S rRNA. The L1 stalk is quite mobile in the ribosome, and is involved in E site tRNA release. In terms of biological role, protein L1 is also a translational repressor protein, it controls the translation of the L11 operon by binding to its mRNA. The protein is Large ribosomal subunit protein uL1 of Klebsiella pneumoniae (strain 342).